Reading from the N-terminus, the 239-residue chain is MEIFPAIDLKEGRCVRLYQGEFSKETVMNEDPVAQAIIFETFGAKRLHIVDLDGAVAGESLNLSVIERICKAVRIPVQVGGGIRSLVSVEKLFSVGVDKVILGTAALYDKPFLEETVRLYKEKIIVGIDAKNGFVATRGWLDVSEISYIDLAKQMEKIGVQTIVFTDISKDGTLAGPNVEQLELLQKNVATRLIASGGIASIQDVKKLNDMNIYGVIIGKALYEKTIDLEEVLEVTKLC.

D8 acts as the Proton acceptor in catalysis. Residue D129 is the Proton donor of the active site.

This sequence belongs to the HisA/HisF family.

Its subcellular location is the cytoplasm. The enzyme catalyses 1-(5-phospho-beta-D-ribosyl)-5-[(5-phospho-beta-D-ribosylamino)methylideneamino]imidazole-4-carboxamide = 5-[(5-phospho-1-deoxy-D-ribulos-1-ylimino)methylamino]-1-(5-phospho-beta-D-ribosyl)imidazole-4-carboxamide. It participates in amino-acid biosynthesis; L-histidine biosynthesis; L-histidine from 5-phospho-alpha-D-ribose 1-diphosphate: step 4/9. The sequence is that of 1-(5-phosphoribosyl)-5-[(5-phosphoribosylamino)methylideneamino] imidazole-4-carboxamide isomerase from Bacillus cereus (strain AH187).